A 389-amino-acid chain; its full sequence is Cobalt-precorrin-5B C(1)-methyltransferase (389 aa).

Residues 1-25 (MESRADHAVPADEGHGATEPPRGRD) are disordered.

Belongs to the CbiD family.

The enzyme catalyses Co-precorrin-5B + S-adenosyl-L-methionine = Co-precorrin-6A + S-adenosyl-L-homocysteine. It participates in cofactor biosynthesis; adenosylcobalamin biosynthesis; cob(II)yrinate a,c-diamide from sirohydrochlorin (anaerobic route): step 6/10. Functionally, catalyzes the methylation of C-1 in cobalt-precorrin-5B to form cobalt-precorrin-6A. The protein is Cobalt-precorrin-5B C(1)-methyltransferase of Nitratidesulfovibrio vulgaris (strain ATCC 29579 / DSM 644 / CCUG 34227 / NCIMB 8303 / VKM B-1760 / Hildenborough) (Desulfovibrio vulgaris).